The following is a 267-amino-acid chain: Membrane-spanning 4-domains subfamily A member 10 (267 aa).

The Cytoplasmic portion of the chain corresponds to M1 to K56. A helical membrane pass occupies residues L57–S77. At T78–H83 the chain is on the extracellular side. Residues L84–M104 form a helical membrane-spanning segment. The Cytoplasmic segment spans residues A105–K118. A helical membrane pass occupies residues V119 to I139. At A140–E168 the chain is on the extracellular side. Residues L169–A189 traverse the membrane as a helical segment. The Cytoplasmic segment spans residues Y190–K267.

It belongs to the MS4A family. Expressed in thymus, kidney, colon, brain and testis. Expressed also by various hematopoietic and lymphoblastoid cell lines.

It localises to the membrane. Its function is as follows. May be involved in signal transduction as a component of a multimeric receptor complex. The protein is Membrane-spanning 4-domains subfamily A member 10 (Ms4a10) of Mus musculus (Mouse).